We begin with the raw amino-acid sequence, 396 residues long: Elongation factor Tu 1 (396 aa).

The region spanning 10–206 (KPHVNIGTIG…AVDEYIPTPE (197 aa)) is the tr-type G domain. Residues 19 to 26 (GHVDHGKT) are G1. 19 to 26 (GHVDHGKT) is a binding site for GTP. Thr-26 is a Mg(2+) binding site. Residues 60–64 (GITIN) are G2. Positions 81–84 (DCPG) are G3. GTP contacts are provided by residues 81 to 85 (DCPGH) and 136 to 139 (NKVD). Residues 136–139 (NKVD) form a G4 region. The G5 stretch occupies residues 174-176 (SAL).

This sequence belongs to the TRAFAC class translation factor GTPase superfamily. Classic translation factor GTPase family. EF-Tu/EF-1A subfamily. As to quaternary structure, monomer.

The protein resides in the cytoplasm. It catalyses the reaction GTP + H2O = GDP + phosphate + H(+). In terms of biological role, GTP hydrolase that promotes the GTP-dependent binding of aminoacyl-tRNA to the A-site of ribosomes during protein biosynthesis. The polypeptide is Elongation factor Tu 1 (Hyphomonas neptunium (strain ATCC 15444)).